We begin with the raw amino-acid sequence, 199 residues long: Ribonuclease HII (199 aa).

Residues 10–199 (HLVAGVDEVG…VKRALGLASN (190 aa)) form the RNase H type-2 domain. The a divalent metal cation site is built by Asp-16, Glu-17, and Asp-108.

Belongs to the RNase HII family. The cofactor is Mn(2+). Mg(2+) serves as cofactor.

The protein resides in the cytoplasm. The catalysed reaction is Endonucleolytic cleavage to 5'-phosphomonoester.. Endonuclease that specifically degrades the RNA of RNA-DNA hybrids. This is Ribonuclease HII from Klebsiella pneumoniae subsp. pneumoniae (strain ATCC 700721 / MGH 78578).